The sequence spans 336 residues: Geranylgeranyl pyrophosphate synthase 6, mitochondrial (336 aa).

Residues 1-22 (MRPRYSLILSAMRLIRPSNRRL) constitute a mitochondrion transit peptide. 3 residues coordinate isopentenyl diphosphate: K80, R83, and H112. Positions 119 and 125 each coordinate Mg(2+). Dimethylallyl diphosphate is bound at residue R130. R131 contacts isopentenyl diphosphate. Positions 221, 222, 259, 276, and 286 each coordinate dimethylallyl diphosphate.

Belongs to the FPP/GGPP synthase family. In terms of assembly, monomer. It depends on Mg(2+) as a cofactor.

It localises to the mitochondrion. The catalysed reaction is isopentenyl diphosphate + dimethylallyl diphosphate = (2E)-geranyl diphosphate + diphosphate. It carries out the reaction isopentenyl diphosphate + (2E)-geranyl diphosphate = (2E,6E)-farnesyl diphosphate + diphosphate. It catalyses the reaction isopentenyl diphosphate + (2E,6E)-farnesyl diphosphate = (2E,6E,10E)-geranylgeranyl diphosphate + diphosphate. It participates in isoprenoid biosynthesis; farnesyl diphosphate biosynthesis; farnesyl diphosphate from geranyl diphosphate and isopentenyl diphosphate: step 1/1. Its pathway is isoprenoid biosynthesis; geranyl diphosphate biosynthesis; geranyl diphosphate from dimethylallyl diphosphate and isopentenyl diphosphate: step 1/1. The protein operates within isoprenoid biosynthesis; geranylgeranyl diphosphate biosynthesis; geranylgeranyl diphosphate from farnesyl diphosphate and isopentenyl diphosphate: step 1/1. Its function is as follows. Catalyzes the trans-addition of the three molecules of IPP onto DMAPP to form geranylgeranyl pyrophosphate. The chain is Geranylgeranyl pyrophosphate synthase 6, mitochondrial from Arabidopsis thaliana (Mouse-ear cress).